Here is a 208-residue protein sequence, read N- to C-terminus: Large ribosomal subunit protein uL4 (208 aa).

The segment at 45-85 (RQGTHKAKTRAQVRGGGRKPYRQKGTGNARQGSTRSPLMIG) is disordered. Basic residues predominate over residues 46 to 66 (QGTHKAKTRAQVRGGGRKPYR). A compositionally biased stretch (polar residues) spans 69–80 (GTGNARQGSTRS).

This sequence belongs to the universal ribosomal protein uL4 family. As to quaternary structure, part of the 50S ribosomal subunit.

Its function is as follows. One of the primary rRNA binding proteins, this protein initially binds near the 5'-end of the 23S rRNA. It is important during the early stages of 50S assembly. It makes multiple contacts with different domains of the 23S rRNA in the assembled 50S subunit and ribosome. In terms of biological role, forms part of the polypeptide exit tunnel. The protein is Large ribosomal subunit protein uL4 of Chlorobium phaeobacteroides (strain DSM 266 / SMG 266 / 2430).